Consider the following 67-residue polypeptide: Large ribosomal subunit protein uL29 (67 aa).

This sequence belongs to the universal ribosomal protein uL29 family.

This is Large ribosomal subunit protein uL29 from Heliobacterium modesticaldum (strain ATCC 51547 / Ice1).